The chain runs to 566 residues: Serine/threonine-protein kinase haspin homolog (566 aa).

The region spanning 248 to 566 (LLNTKKIGEG…HCANYLFNLN (319 aa)) is the Protein kinase domain. ATP-binding positions include 254–262 (IGEGAYGEV), Lys282, 377–382 (KFAGSD), 418–423 (DLHLGN), and 456–458 (DYT). The active-site Proton acceptor is Asp418.

It belongs to the protein kinase superfamily. Ser/Thr protein kinase family. Haspin subfamily. Interacts with pds5 and vtd. The cofactor is Mg(2+).

Its subcellular location is the nucleus lamina. It localises to the chromosome. The protein localises to the cytoplasm. It is found in the cytoskeleton. The protein resides in the spindle. The enzyme catalyses L-seryl-[protein] + ATP = O-phospho-L-seryl-[protein] + ADP + H(+). The catalysed reaction is L-threonyl-[protein] + ATP = O-phospho-L-threonyl-[protein] + ADP + H(+). Serine/threonine-protein kinase that phosphorylates histone H3 at 'Thr-4' (H3T3ph) during mitosis and interphase. Function is essential for chromosome organization during mitosis and genome organization in interphase cells, thus playing a functional role in gene regulation. During mitosis, may act through H3T3ph to both position and modulate activation of AURKB and other components of the chromosomal passenger complex (CPC) at centromeres to ensure proper chromatid cohesion, metaphase alignment and normal progression through the cell cycle. During interphase, associates with the cohesion complex and mediates pds5 binding to chromatin to ensure correct sister chromatid cohesion, chromatin organization, and also functions with Pds5-cohesin to modify Polycomb-dependent homeotic transformations. Function during interphase is required for insulator activity, nuclear compaction, heterochromatin-induced position-effect variegation and PcG-mediated pairing-sensitive silencing. In Drosophila melanogaster (Fruit fly), this protein is Serine/threonine-protein kinase haspin homolog.